Here is a 92-residue protein sequence, read N- to C-terminus: Small ribosomal subunit protein uS19 (92 aa).

This sequence belongs to the universal ribosomal protein uS19 family.

In terms of biological role, protein S19 forms a complex with S13 that binds strongly to the 16S ribosomal RNA. This chain is Small ribosomal subunit protein uS19, found in Rhodopseudomonas palustris (strain BisA53).